A 336-amino-acid polypeptide reads, in one-letter code: Potassium channel subfamily K member 1 (336 aa).

Residues 1-20 (MLQSLAGSSCVRLVERHRSA) are Cytoplasmic-facing. Residues 21-41 (WCFGFLVLGYLLYLVFGAVVF) traverse the membrane as a helical segment. Topologically, residues 42 to 103 (SSVELPYEDL…SNASGNWNWD (62 aa)) are extracellular. A glycan (N-linked (GlcNAc...) asparagine) is linked at Asn-95. The segment at residues 104–116 (FTSALFFASTVLS) is an intramembrane region (helical). The stretch at 117 to 122 (TTGYGH) is an intramembrane region. Positions 117 to 122 (TTGYGH) are selectivity filter 1. Residues 123–132 (TVPLSDGGKA) lie on the Extracellular side of the membrane. A helical membrane pass occupies residues 133–156 (FCIIYSVIGIPFTLLFLTAVVQRI). At 157 to 181 (TVHVTRRPVLYFHIRWGFSKQVVAI) the chain is on the cytoplasmic side. Residues 182–202 (VHAVLLGFVTVSCFFFIPAAV) form a helical membrane-spanning segment. The Extracellular portion of the chain corresponds to 203–211 (FSVLEDDWN). Positions 212–224 (FLESFYFCFISLS) form an intramembrane region, helical. A selectivity filter 2 region spans residues 225 to 230 (TIGLGD). An intramembrane segment occupies 225-231 (TIGLGDY). Topologically, residues 232-243 (VPGEGYNQKFRE) are extracellular. The helical transmembrane segment at 244-267 (LYKIGITCYLLLGLIAMLVVLETF) threads the bilayer. At 268 to 336 (CELHELKKFR…SACVDGPANH (69 aa)) the chain is on the cytoplasmic side. Residue Lys-274 forms a Glycyl lysine isopeptide (Lys-Gly) (interchain with G-Cter in SUMO) linkage. The important for intracellular retention in recycling endosomes stretch occupies residues 293-299 (IIEHDQL). The residue at position 326 (Ser-326) is a Phosphoserine.

It belongs to the two pore domain potassium channel (TC 1.A.1.8) family. Homodimer; disulfide-linked. Heterodimer with KCNK2; disulfide-linked. In astrocytes, forms mostly heterodimeric potassium channels with KCNK2, with only a minor proportion of functional channels containing homodimeric KCNK1. Interacts with KCNK3 and KCNK9, forming functional heterodimeric channels. Interacts with GNG4. Identified in a complex with PSD and ARF6; interacts only with PSD that is bound to ARF6. Interacts with UBE2I. Sumoylation is controversial. Sumoylated by UBE2I. Not sumoylated when expressed in xenopus oocytes or mammalian cells. Sumoylation inactivates the channel, but does not interfere with expression at the cell membrane. Sumoylation of a single subunit is sufficient to silence the dimeric channel. Sumoylation of KCNK1 is sufficient to silence heterodimeric channels formed by KCNK1 and KCNK3 or KCNK9. Desumoylated by SENP1; this activates the channel. Desumoylated by SENP1; this strongly increases halothane-mediated activation of heterodimeric channels formed with KCNK9. SENP1 treatment has no effect. Detected in bronchial epithelial cells. Detected in heart left atrium and left ventricle. Detected in cardiac myocytes (at protein level). Widely expressed with high levels in heart, brain and kidney, and lower levels in colon, ovary, placenta, lung and liver. Highly expressed in cerebellum, and detected at lower levels in amygdala, caudate nucleus, brain cortex, hippocampus, putamen, substantia nigra, thalamus, dorsal root ganglion, spinal cord, pituitary, heart, kidney, lung, placenta, pancreas, stomach, small intestine, uterus and prostate. Detected in right and left heart ventricle and atrium, and in heart Purkinje fibers.

The protein localises to the cell membrane. Its subcellular location is the recycling endosome. It localises to the synaptic cell membrane. The protein resides in the cytoplasmic vesicle. It is found in the perikaryon. The protein localises to the cell projection. Its subcellular location is the dendrite. It localises to the apical cell membrane. It carries out the reaction K(+)(in) = K(+)(out). The catalysed reaction is NH4(+)(in) = NH4(+)(out). It catalyses the reaction Na(+)(in) = Na(+)(out). The enzyme catalyses Rb(+)(in) = Rb(+)(out). It carries out the reaction Cs(+)(in) = Cs(+)(out). The catalysed reaction is Li(+)(in) = Li(+)(out). It catalyses the reaction L-glutamate(out) = L-glutamate(in). The enzyme catalyses chloride(in) = chloride(out). Its activity is regulated as follows. Inhibited by Ba(2+) ions and quinidine. Inhibited by quinine. Is slightly inhibited by 10 mM tetraethylammonium (TEA), and only marginally inhibited by 4-aminopyridine, charybdotoxin and dendrotoxin. Lowering the extracellular pH to below 6.5 transiently activates the channel, and then inhibits channel activity. Inhibited when the intracellular pH is decreased down to pH 6.0, but this may be due to indirect effects. Its function is as follows. Ion channel that contributes to passive transmembrane potassium transport and to the regulation of the resting membrane potential in brain astrocytes, but also in kidney and in other tissues. Forms dimeric channels through which potassium ions pass in accordance with their electrochemical gradient. The channel is selective for K(+) ions at physiological potassium concentrations and at neutral pH, but becomes permeable to Na(+) at subphysiological K(+) levels and upon acidification of the extracellular medium. The homodimer has very low potassium channel activity, when expressed in heterologous systems, and can function as weakly inward rectifying potassium channel. Channel activity is modulated by activation of serotonin receptors. Heterodimeric channels containing KCNK1 and KCNK2 have much higher activity, and may represent the predominant form in astrocytes. Heterodimeric channels containing KCNK1 and KCNK3 or KCNK9 have much higher activity. Heterodimeric channels formed by KCNK1 and KCNK9 may contribute to halothane-sensitive currents. Mediates outward rectifying potassium currents in dentate gyrus granule cells and contributes to the regulation of their resting membrane potential. Contributes to the regulation of action potential firing in dentate gyrus granule cells and down-regulates their intrinsic excitability. In astrocytes, the heterodimer formed by KCNK1 and KCNK2 is required for rapid glutamate release in response to activation of G-protein coupled receptors, such as F2R and CNR1. Required for normal ion and water transport in the kidney. Contributes to the regulation of the resting membrane potential of pancreatic beta cells. The low channel activity of homodimeric KCNK1 may be due to sumoylation. The low channel activity may be due to rapid internalization from the cell membrane and retention in recycling endosomes. Permeable to monovalent cations with ion selectivity for K(+) &gt; Rb(+) &gt;&gt; NH4(+) &gt;&gt; Cs(+) = Na(+) = Li(+). The polypeptide is Potassium channel subfamily K member 1 (KCNK1) (Homo sapiens (Human)).